The following is a 559-amino-acid chain: DDB1- and CUL4-associated factor 10 (559 aa).

The interval 1–119 is disordered; it reads MFPFGPHSPG…HGLGAGLGGP (119 aa). Phosphoserine occurs at positions 53, 63, 89, and 92. The span at 56–86 shows a compositional bias: low complexity; the sequence is RPGAPSLSPAPRSGELGLPGAPESSTASAPG. Pro residues predominate over residues 87-97; it reads EPSPPSPPCRR. Residue arginine 134 is modified to Omega-N-methylarginine. WD repeat units follow at residues 166-205, 209-247, 251-290, and 296-335; these read RTHG…HIKT, AHED…TKVC, GHTS…EDGC, and FHTR…KSLE. A Phosphoserine modification is found at serine 349. Over residues 350 to 367 the composition is skewed to low complexity; the sequence is SSDLTTSSSSSGPRVSGS. A disordered region spans residues 350–396; sequence SSDLTTSSSSSGPRVSGSPCHHSDSNSSEKHMSRASQREGVSPRNSL. The span at 370–381 shows a compositional bias: basic and acidic residues; that stretch reads HHSDSNSSEKHM. WD repeat units lie at residues 408–448, 470–508, and 526–559; these read DHGN…QEGA, VGRG…SELV, and SHND…QPKF.

This sequence belongs to the WD repeat DCAF10 family. In terms of assembly, interacts with DDB1.

It participates in protein modification; protein ubiquitination. Its function is as follows. May function as a substrate receptor for CUL4-DDB1 E3 ubiquitin-protein ligase complex. In Homo sapiens (Human), this protein is DDB1- and CUL4-associated factor 10 (DCAF10).